Consider the following 371-residue polypeptide: Putative phosphoserine aminotransferase (371 aa).

Arg45 provides a ligand contact to L-glutamate. The pyridoxal 5'-phosphate site is built by Phe103, Thr149, Asp171, and Gln194. Lys195 bears the N6-(pyridoxal phosphate)lysine mark. Asn246 to Thr247 is a pyridoxal 5'-phosphate binding site.

The protein belongs to the class-V pyridoxal-phosphate-dependent aminotransferase family. SerC subfamily. Homodimer. Pyridoxal 5'-phosphate is required as a cofactor.

The protein localises to the cytoplasm. The enzyme catalyses O-phospho-L-serine + 2-oxoglutarate = 3-phosphooxypyruvate + L-glutamate. It catalyses the reaction 4-(phosphooxy)-L-threonine + 2-oxoglutarate = (R)-3-hydroxy-2-oxo-4-phosphooxybutanoate + L-glutamate. It participates in amino-acid biosynthesis; L-serine biosynthesis; L-serine from 3-phospho-D-glycerate: step 2/3. Its pathway is cofactor biosynthesis; pyridoxine 5'-phosphate biosynthesis; pyridoxine 5'-phosphate from D-erythrose 4-phosphate: step 3/5. In terms of biological role, catalyzes the reversible conversion of 3-phosphohydroxypyruvate to phosphoserine and of 3-hydroxy-2-oxo-4-phosphonooxybutanoate to phosphohydroxythreonine. This chain is Putative phosphoserine aminotransferase, found in Mycolicibacterium vanbaalenii (strain DSM 7251 / JCM 13017 / BCRC 16820 / KCTC 9966 / NRRL B-24157 / PYR-1) (Mycobacterium vanbaalenii).